A 150-amino-acid chain; its full sequence is Ribonuclease H (150 aa).

The 142-residue stretch at 2–143 (PAPILDIFVD…ADELANRAIE (142 aa)) folds into the RNase H type-1 domain. Mg(2+) contacts are provided by aspartate 11, glutamate 49, aspartate 71, and aspartate 135.

This sequence belongs to the RNase H family. In terms of assembly, monomer. Requires Mg(2+) as cofactor.

It localises to the cytoplasm. The catalysed reaction is Endonucleolytic cleavage to 5'-phosphomonoester.. In terms of biological role, endonuclease that specifically degrades the RNA of RNA-DNA hybrids. The chain is Ribonuclease H from Dichelobacter nodosus (strain VCS1703A).